Consider the following 270-residue polypeptide: HTH-type transcriptional activator AllS (270 aa).

Residues 4–61 (LDPETLRTFVSVAETGSFSRAAEKLYKTTATISYRIKLLEDNTGVALFSRTTRSVLLT) form the HTH lysR-type domain. The H-T-H motif DNA-binding region spans 21-40 (FSRAAEKLYKTTATISYRIK).

Belongs to the LysR transcriptional regulatory family.

Positive regulator essential for the expression of allD operon. Binds to the allD promoter. The sequence is that of HTH-type transcriptional activator AllS (allS) from Klebsiella pneumoniae.